We begin with the raw amino-acid sequence, 338 residues long: Tryptophan--tRNA ligase (338 aa).

Residues 11–13 (QPS) and 19–20 (GN) contribute to the ATP site. A 'HIGH' region motif is present at residues 12–20 (PSGELSIGN). Residue aspartate 135 coordinates L-tryptophan. Residues 147–149 (GSD), valine 189, and 198–202 (KMSKS) contribute to the ATP site. The 'KMSKS' region signature appears at 198 to 202 (KMSKS).

Belongs to the class-I aminoacyl-tRNA synthetase family. Homodimer.

It is found in the cytoplasm. The catalysed reaction is tRNA(Trp) + L-tryptophan + ATP = L-tryptophyl-tRNA(Trp) + AMP + diphosphate + H(+). Catalyzes the attachment of tryptophan to tRNA(Trp). This chain is Tryptophan--tRNA ligase, found in Vibrio cholerae serotype O1 (strain ATCC 39315 / El Tor Inaba N16961).